The following is a 54-amino-acid chain: Relaxin (54 aa).

Gln-1 carries the post-translational modification Pyrrolidone carboxylic acid. 3 cysteine pairs are disulfide-bonded: Cys-13/Cys-41, Cys-25/Cys-54, and Cys-40/Cys-45.

Belongs to the insulin family. In terms of assembly, heterodimer of a B chain and an A chain linked by two disulfide bonds.

It localises to the secreted. Its function is as follows. The function of relaxin in an oviparous species is not yet known. The protein is Relaxin of Squalus acanthias (Spiny dogfish).